The chain runs to 313 residues: UbiA prenyltransferase claS (313 aa).

2 helical membrane passes run 30-52 (FAGT…RALL) and 57-79 (TFGT…GCIW). The NDxxDxxxD motif lies at 81-88 (DILDQDFD). Positions 84 and 88 each coordinate Mg(2+). The next 3 helical transmembrane spans lie at 99–121 (IASG…FILM), 131–148 (AWMI…IYPL), and 155–177 (WPQA…YTTG). Positions 205 and 209 each coordinate Mg(2+). Residues 205-209 (DKKDD) carry the DxxxD motif. The YxxxK signature appears at 205–209 (DKKDD). 3 consecutive transmembrane segments (helical) span residues 227-247 (PVLS…GILN), 250-270 (ELPY…TQLW), and 293-313 (AIVW…GAIM).

It belongs to the UbiA prenyltransferase family. Mg(2+) is required as a cofactor.

Its subcellular location is the membrane. It carries out the reaction hydroquinone + (2E)-geranyl diphosphate = (2E)-geranylhydroquinone + diphosphate. Its pathway is secondary metabolite biosynthesis; terpenoid biosynthesis. Its function is as follows. Prenyltransferase; part of the gene cluster that mediates the biosynthesis of clavilactone A, a meroterpenoid that features a unique benzo-fused ten-membered carbocyclic ring unit with an alpha,beta-epoxy-gamma-lactone moiety, forming an intriguing 10/5/3 tricyclic nested skeleton. ClaR, ClaS and ClaT are sufficient to produce clavilactone A. Within the pathway, claS acts as an atypical UbiA prenyltransferase that transfers geranyl pyrophosphate (GPP) to hydroquinone (HYQ) instead of p-hydroxybenzoic acid (PHB), producing the first intermediate geranylhydroquinone. The cytochrome P450 monooxygenase claR then catalyzes the diradical coupling reaction between the intramolecular hydroquinone and allyl moieties to form the benzo-fused ten-membered carbocyclic ring unit of wigantol. Finally the cytochrome P450 monooxygenase claT exquisitely and stereoselectively assembles the alpha,beta-epoxy-gamma-lactone moiety, producing clavilactone A via arnebinol A. This is UbiA prenyltransferase claS from Ampulloclitocybe clavipes (Club foot).